The primary structure comprises 539 residues: CTP synthase (539 aa).

The segment at 1-267 is amidoligase domain; sequence MTKYIFVTGG…DQKVVDFLHI (267 aa). Ser-13 lines the CTP pocket. UTP is bound at residue Ser-13. 14–19 is an ATP binding site; it reads SLGKGI. Tyr-54 is an L-glutamine binding site. Asp-71 provides a ligand contact to ATP. 2 residues coordinate Mg(2+): Asp-71 and Glu-141. Residues 148-150, 188-193, and Lys-224 each bind CTP; these read DME and KSKPTQ. UTP is bound by residues 188-193 and Lys-224; that span reads KSKPTQ. The Glutamine amidotransferase type-1 domain occupies 294–537; the sequence is KITLVGKYVE…IGAASGLQVD (244 aa). Residue Gly-356 coordinates L-glutamine. The active-site Nucleophile; for glutamine hydrolysis is the Cys-383. Residues 384–387, Glu-407, and Arg-465 each bind L-glutamine; that span reads LGMQ. Catalysis depends on residues His-510 and Glu-512.

The protein belongs to the CTP synthase family. As to quaternary structure, homotetramer.

It catalyses the reaction UTP + L-glutamine + ATP + H2O = CTP + L-glutamate + ADP + phosphate + 2 H(+). The enzyme catalyses L-glutamine + H2O = L-glutamate + NH4(+). It carries out the reaction UTP + NH4(+) + ATP = CTP + ADP + phosphate + 2 H(+). It functions in the pathway pyrimidine metabolism; CTP biosynthesis via de novo pathway; CTP from UDP: step 2/2. Allosterically activated by GTP, when glutamine is the substrate; GTP has no effect on the reaction when ammonia is the substrate. The allosteric effector GTP functions by stabilizing the protein conformation that binds the tetrahedral intermediate(s) formed during glutamine hydrolysis. Inhibited by the product CTP, via allosteric rather than competitive inhibition. Its function is as follows. Catalyzes the ATP-dependent amination of UTP to CTP with either L-glutamine or ammonia as the source of nitrogen. Regulates intracellular CTP levels through interactions with the four ribonucleotide triphosphates. This is CTP synthase from Lactobacillus delbrueckii subsp. bulgaricus (strain ATCC 11842 / DSM 20081 / BCRC 10696 / JCM 1002 / NBRC 13953 / NCIMB 11778 / NCTC 12712 / WDCM 00102 / Lb 14).